A 433-amino-acid polypeptide reads, in one-letter code: 5-methylthioadenosine/S-adenosylhomocysteine deaminase (433 aa).

Zn(2+) contacts are provided by His-67 and His-69. Substrate-binding residues include Glu-96, Arg-148, Arg-158, and His-186. His-213 provides a ligand contact to Zn(2+). Substrate is bound by residues Glu-216 and Asp-301. Position 301 (Asp-301) interacts with Zn(2+).

Belongs to the metallo-dependent hydrolases superfamily. MTA/SAH deaminase family. Zn(2+) serves as cofactor.

It catalyses the reaction S-adenosyl-L-homocysteine + H2O + H(+) = S-inosyl-L-homocysteine + NH4(+). It carries out the reaction S-methyl-5'-thioadenosine + H2O + H(+) = S-methyl-5'-thioinosine + NH4(+). Its function is as follows. Catalyzes the deamination of 5-methylthioadenosine and S-adenosyl-L-homocysteine into 5-methylthioinosine and S-inosyl-L-homocysteine, respectively. Is also able to deaminate adenosine. The sequence is that of 5-methylthioadenosine/S-adenosylhomocysteine deaminase from Pelotomaculum thermopropionicum (strain DSM 13744 / JCM 10971 / SI).